The sequence spans 120 residues: Large ribosomal subunit protein bL19 (120 aa).

It belongs to the bacterial ribosomal protein bL19 family.

Its function is as follows. This protein is located at the 30S-50S ribosomal subunit interface and may play a role in the structure and function of the aminoacyl-tRNA binding site. This chain is Large ribosomal subunit protein bL19, found in Geobacillus kaustophilus (strain HTA426).